A 338-amino-acid polypeptide reads, in one-letter code: Ferrochelatase (338 aa).

Fe cation-binding residues include H189 and E294.

It belongs to the ferrochelatase family.

Its subcellular location is the cytoplasm. It catalyses the reaction heme b + 2 H(+) = protoporphyrin IX + Fe(2+). It functions in the pathway porphyrin-containing compound metabolism; protoheme biosynthesis; protoheme from protoporphyrin-IX: step 1/1. Catalyzes the ferrous insertion into protoporphyrin IX. The polypeptide is Ferrochelatase (Pseudomonas putida (strain ATCC 700007 / DSM 6899 / JCM 31910 / BCRC 17059 / LMG 24140 / F1)).